Consider the following 282-residue polypeptide: Hydroxyacylglutathione hydrolase-like protein (282 aa).

Positions 54, 56, 58, 59, 110, 134, and 173 each coordinate Zn(2+).

This sequence belongs to the metallo-beta-lactamase superfamily. Glyoxalase II family. Zn(2+) is required as a cofactor.

Hydrolase acting on ester bonds. This chain is Hydroxyacylglutathione hydrolase-like protein (HAGHL), found in Gallus gallus (Chicken).